The primary structure comprises 41 residues: Cytochrome b559 subunit beta (41 aa).

Residues 16–32 (WLAVHALAVPTVFFLGS) traverse the membrane as a helical segment. Histidine 20 contributes to the heme binding site.

It belongs to the PsbE/PsbF family. As to quaternary structure, heterodimer of an alpha subunit and a beta subunit. PSII is composed of 1 copy each of membrane proteins PsbA, PsbB, PsbC, PsbD, PsbE, PsbF, PsbH, PsbI, PsbJ, PsbK, PsbL, PsbM, PsbT, PsbX, PsbY, PsbZ, Psb30/Ycf12, at least 3 peripheral proteins of the oxygen-evolving complex and a large number of cofactors. It forms dimeric complexes. The cofactor is heme b.

The protein resides in the plastid. It localises to the chloroplast thylakoid membrane. Functionally, this b-type cytochrome is tightly associated with the reaction center of photosystem II (PSII). PSII is a light-driven water:plastoquinone oxidoreductase that uses light energy to abstract electrons from H(2)O, generating O(2) and a proton gradient subsequently used for ATP formation. It consists of a core antenna complex that captures photons, and an electron transfer chain that converts photonic excitation into a charge separation. The polypeptide is Cytochrome b559 subunit beta (Nephroselmis olivacea (Green alga)).